The following is a 417-amino-acid chain: Leucine-rich repeat-containing protein 42 (417 aa).

4 LRR repeats span residues 167–188, 195–215, 227–248, and 252–273; these read CLHS…LAHL, SLTE…QKMT, KLKV…CFLF, and LLKF…LKKI. Residues 360 to 390 are disordered; it reads FFRPKEQKDPDSSNSEKRRHSTKRTGADCVQ. The segment covering 362-375 has biased composition (basic and acidic residues); the sequence is RPKEQKDPDSSNSE.

Belongs to the LRRC42 family.

In Xenopus laevis (African clawed frog), this protein is Leucine-rich repeat-containing protein 42 (lrrc42).